A 630-amino-acid chain; its full sequence is Probable potassium transport system protein Kup (630 aa).

12 helical membrane-spanning segments follow: residues 17 to 37, 51 to 71, 105 to 125, 144 to 164, 175 to 195, 218 to 238, 255 to 275, 283 to 303, 344 to 364, 374 to 394, 402 to 422, and 428 to 448; these read LAIA…LYSL, PSAI…VVGI, ITGL…GDAV, PQLS…LFWI, LFGP…VYHI, VLLA…AEAL, YVLV…LLLL, PFFL…STVA, IYVP…VIGF, YGIA…VVMV, LLVA…FGAN, and QGGW…MTWY.

This sequence belongs to the HAK/KUP transporter (TC 2.A.72) family.

It localises to the cell inner membrane. The catalysed reaction is K(+)(in) + H(+)(in) = K(+)(out) + H(+)(out). In terms of biological role, transport of potassium into the cell. Likely operates as a K(+):H(+) symporter. The sequence is that of Probable potassium transport system protein Kup from Burkholderia thailandensis (strain ATCC 700388 / DSM 13276 / CCUG 48851 / CIP 106301 / E264).